A 358-amino-acid chain; its full sequence is Peptide chain release factor 1 (358 aa).

Glutamine 233 carries the post-translational modification N5-methylglutamine. Residues 282–306 (QRAASERSADRRGQVGSGDRSERVR) show a composition bias toward basic and acidic residues. Residues 282-308 (QRAASERSADRRGQVGSGDRSERVRTY) form a disordered region.

Belongs to the prokaryotic/mitochondrial release factor family. In terms of processing, methylated by PrmC. Methylation increases the termination efficiency of RF1.

It is found in the cytoplasm. Functionally, peptide chain release factor 1 directs the termination of translation in response to the peptide chain termination codons UAG and UAA. This chain is Peptide chain release factor 1, found in Afipia carboxidovorans (strain ATCC 49405 / DSM 1227 / KCTC 32145 / OM5) (Oligotropha carboxidovorans).